The following is a 199-amino-acid chain: Probable DNA-directed RNA polymerase subunit delta (199 aa).

An HTH HARE-type domain is found at 14-81 (LSLIEVAHAI…GDNMWGLRAW (68 aa)). Composition is skewed to acidic residues over residues 116–147 (GDDDDVIDYDDDDPEDDDNYDDDDDQDDDTDD), 157–171 (AGVDDTDDDVADETL), and 182–199 (LNDDDDDDDYDDEDDESK). The disordered stretch occupies residues 116 to 199 (GDDDDVIDYD…DYDDEDDESK (84 aa)).

The protein belongs to the RpoE family. As to quaternary structure, RNAP is composed of a core of 2 alpha, a beta and a beta' subunits. The core is associated with a delta subunit and one of several sigma factors.

Functionally, participates in both the initiation and recycling phases of transcription. In the presence of the delta subunit, RNAP displays an increased specificity of transcription, a decreased affinity for nucleic acids, and an increased efficiency of RNA synthesis because of enhanced recycling. The chain is Probable DNA-directed RNA polymerase subunit delta from Lactiplantibacillus plantarum (strain ATCC BAA-793 / NCIMB 8826 / WCFS1) (Lactobacillus plantarum).